The following is a 277-amino-acid chain: Large ribosomal subunit protein uL2 (277 aa).

Residues 218-277 (PTVRGSVMNPNDHPHGGGEGKSPIGHPSPLTPWGKPALGYKTRKNKKYSDGMIIKRRGQK) form a disordered region.

The protein belongs to the universal ribosomal protein uL2 family. Part of the 50S ribosomal subunit. Forms a bridge to the 30S subunit in the 70S ribosome.

One of the primary rRNA binding proteins. Required for association of the 30S and 50S subunits to form the 70S ribosome, for tRNA binding and peptide bond formation. It has been suggested to have peptidyltransferase activity; this is somewhat controversial. Makes several contacts with the 16S rRNA in the 70S ribosome. This is Large ribosomal subunit protein uL2 from Clostridium novyi (strain NT).